A 290-amino-acid chain; its full sequence is 4-hydroxy-tetrahydrodipicolinate synthase (290 aa).

Threonine 44 lines the pyruvate pocket. Tyrosine 132 functions as the Proton donor/acceptor in the catalytic mechanism. Lysine 160 (schiff-base intermediate with substrate) is an active-site residue. Position 202 (isoleucine 202) interacts with pyruvate.

Belongs to the DapA family. Homotetramer; dimer of dimers.

Its subcellular location is the cytoplasm. The catalysed reaction is L-aspartate 4-semialdehyde + pyruvate = (2S,4S)-4-hydroxy-2,3,4,5-tetrahydrodipicolinate + H2O + H(+). The protein operates within amino-acid biosynthesis; L-lysine biosynthesis via DAP pathway; (S)-tetrahydrodipicolinate from L-aspartate: step 3/4. Functionally, catalyzes the condensation of (S)-aspartate-beta-semialdehyde [(S)-ASA] and pyruvate to 4-hydroxy-tetrahydrodipicolinate (HTPA). The protein is 4-hydroxy-tetrahydrodipicolinate synthase of Alkaliphilus oremlandii (strain OhILAs) (Clostridium oremlandii (strain OhILAs)).